The primary structure comprises 75 residues: UPF0270 protein Pfl01_4103 (75 aa).

It belongs to the UPF0270 family.

The sequence is that of UPF0270 protein Pfl01_4103 from Pseudomonas fluorescens (strain Pf0-1).